Consider the following 567-residue polypeptide: Ran-binding protein 3 (567 aa).

Residues 1-10 (MADLANEEKP) show a composition bias toward basic and acidic residues. Disordered regions lie at residues 1 to 263 (MADL…FVFG), 332 to 373 (LSPP…AESA), and 515 to 567 (VEQE…TGST). Alanine 2 carries the N-acetylalanine modification. N6-acetyllysine is present on residues lysine 9 and lysine 21. Basic and acidic residues predominate over residues 39–49 (EEPRGEAEAPH). Residue threonine 75 is modified to Phosphothreonine. Pro residues predominate over residues 75–89 (TPPPPAPEAQLPPFP). Serine 100, serine 101, and serine 108 each carry phosphoserine. The short motif at 117–125 (PPVKRERTS) is the Nuclear localization signal element. Threonine 124 bears the Phosphothreonine mark. 2 stretches are compositionally biased toward polar residues: residues 125–134 (SSLTQFPPSQ) and 184–197 (ALSQ…TNGV). Residue serine 126 is modified to Phosphoserine. Phosphoserine occurs at positions 219, 333, 353, 355, and 372. Residues 347 to 362 (ENAAAESGSESSSQEA) show a composition bias toward low complexity. The 141-residue stretch at 378 to 518 (KATARKCLLE…LALRSRVEQE (141 aa)) folds into the RanBD1 domain. Positions 534-544 (NEEDDSDDDDV) are enriched in acidic residues. A Phosphoserine modification is found at serine 539. The segment covering 549–567 (GATAAGAGDEGDGQTTGST) has biased composition (low complexity).

Interacts with CHC1 in a Ran-stimulated manner. Interacts with XPO1. Interacts (via its C-terminal R domain) with SMAD2 (dephosphorylated form via its MH1 and MH2 domains); the interaction results in the nuclear export of SMAD2 and termination of the TGF-beta signaling. Interacts (via its C-terminal R domain) with SMAD3 (dephosphorylated form via its MH1 domain); the interaction results in the nuclear export of SMAD3 and termination of the TGF-beta signaling. In terms of processing, phosphorylation at Ser-126 promotes its import into the nucleus. As to expression, widely expressed with high levels in testis and heart.

Its subcellular location is the cytoplasm. The protein localises to the nucleus. Its function is as follows. Acts as a cofactor for XPO1/CRM1-mediated nuclear export, perhaps as export complex scaffolding protein. Bound to XPO1/CRM1, stabilizes the XPO1/CRM1-cargo interaction. In the absence of Ran-bound GTP prevents binding of XPO1/CRM1 to the nuclear pore complex. Binds to CHC1/RCC1 and increases the guanine nucleotide exchange activity of CHC1/RCC1. Recruits XPO1/CRM1 to CHC1/RCC1 in a Ran-dependent manner. Negative regulator of TGF-beta signaling through interaction with the R-SMAD proteins, SMAD2 and SMAD3, and mediating their nuclear export. In Homo sapiens (Human), this protein is Ran-binding protein 3 (RANBP3).